The following is a 601-amino-acid chain: Elongation factor 4 (601 aa).

The tr-type G domain occupies 7-189 (ELIRNFSIIA…ALVTRLPPPK (183 aa)). GTP is bound by residues 19 to 24 (DHGKST) and 136 to 139 (NKID).

Belongs to the TRAFAC class translation factor GTPase superfamily. Classic translation factor GTPase family. LepA subfamily.

The protein resides in the cell inner membrane. It catalyses the reaction GTP + H2O = GDP + phosphate + H(+). Required for accurate and efficient protein synthesis under certain stress conditions. May act as a fidelity factor of the translation reaction, by catalyzing a one-codon backward translocation of tRNAs on improperly translocated ribosomes. Back-translocation proceeds from a post-translocation (POST) complex to a pre-translocation (PRE) complex, thus giving elongation factor G a second chance to translocate the tRNAs correctly. Binds to ribosomes in a GTP-dependent manner. The sequence is that of Elongation factor 4 from Acidiphilium cryptum (strain JF-5).